We begin with the raw amino-acid sequence, 238 residues long: N-terminal acetyltransferase A complex catalytic subunit ARD1 (238 aa).

One can recognise an N-acetyltransferase domain in the interval 35–195 (YHILSWPEAS…DAYAMKKVLK (161 aa)).

This sequence belongs to the acetyltransferase family. ARD1 subfamily. Component of the N-terminal acetyltransferase A (NatA) complex, which is composed of ARD1, NAT1 and NAT5. Can self-associate.

The protein localises to the cytoplasm. The enzyme catalyses N-terminal glycyl-[protein] + acetyl-CoA = N-terminal N(alpha)-acetylglycyl-[protein] + CoA + H(+). The catalysed reaction is N-terminal L-alanyl-[protein] + acetyl-CoA = N-terminal N(alpha)-acetyl-L-alanyl-[protein] + CoA + H(+). It carries out the reaction N-terminal L-seryl-[protein] + acetyl-CoA = N-terminal N(alpha)-acetyl-L-seryl-[protein] + CoA + H(+). It catalyses the reaction N-terminal L-valyl-[protein] + acetyl-CoA = N-terminal N(alpha)-acetyl-L-valyl-[protein] + CoA + H(+). The enzyme catalyses N-terminal L-cysteinyl-[protein] + acetyl-CoA = N-terminal N(alpha)-acetyl-L-cysteinyl-[protein] + CoA + H(+). The catalysed reaction is N-terminal L-threonyl-[protein] + acetyl-CoA = N-terminal N(alpha)-acetyl-L-threonyl-[protein] + CoA + H(+). Functionally, catalytic component of the NatA N-terminal acetyltransferase, which catalyzes acetylation of proteins beginning with Met-Ser, Met-Gly and Met-Ala. N-acetylation plays a role in normal eukaryotic translation and processing, protect against proteolytic degradation and protein turnover. In Saccharomyces cerevisiae (strain ATCC 204508 / S288c) (Baker's yeast), this protein is N-terminal acetyltransferase A complex catalytic subunit ARD1 (ARD1).